Consider the following 211-residue polypeptide: Riboflavin kinase (211 aa).

Positions methionine 1–serine 81 are H-T-H motif-like. The segment at isoleucine 82–glutamate 211 is riboflavin kinase. Glycine 91–alanine 96 provides a ligand contact to CDP. Residues threonine 120 and asparagine 122 each contribute to the Mg(2+) site. Residues threonine 177 and glutamate 185 each contribute to the FMN site. Phenylalanine 190–arginine 193 is a CDP binding site.

The protein belongs to the archaeal riboflavin kinase family. Mg(2+) serves as cofactor.

It carries out the reaction riboflavin + CTP = CDP + FMN + H(+). Its pathway is cofactor biosynthesis; FMN biosynthesis; FMN from riboflavin (CTP route): step 1/1. In terms of biological role, catalyzes the CTP-dependent phosphorylation of riboflavin (vitamin B2) to form flavin mononucleotide (FMN). The polypeptide is Riboflavin kinase (ribK) (Pyrobaculum islandicum (strain DSM 4184 / JCM 9189 / GEO3)).